The sequence spans 106 residues: Large ribosomal subunit protein eL42 (106 aa).

Residues 34-53 (YAQGRRRYDRKRSGYGGQTK) form a disordered region. Lys-53 bears the N6-methyllysine mark.

It belongs to the eukaryotic ribosomal protein eL42 family.

Its subcellular location is the cytoplasm. This Pongo abelii (Sumatran orangutan) protein is Large ribosomal subunit protein eL42 (RPL36AL).